The chain runs to 136 residues: Large ribosomal subunit protein bL17 (136 aa).

Belongs to the bacterial ribosomal protein bL17 family. As to quaternary structure, part of the 50S ribosomal subunit. Contacts protein L32.

The polypeptide is Large ribosomal subunit protein bL17 (Akkermansia muciniphila (strain ATCC BAA-835 / DSM 22959 / JCM 33894 / BCRC 81048 / CCUG 64013 / CIP 107961 / Muc)).